The following is a 688-amino-acid chain: DNA ligase (688 aa).

Residues 42–46, 91–92, and Glu-128 contribute to the NAD(+) site; these read DAEYD and SL. The active-site N6-AMP-lysine intermediate is Lys-130. Residues Arg-151, Glu-188, Lys-305, and Lys-329 each contribute to the NAD(+) site. Zn(2+) contacts are provided by Cys-423, Cys-426, Cys-441, and Cys-447. The BRCT domain occupies 608-688; sequence APQGVLAGKT…GMRKLLEGQL (81 aa).

It belongs to the NAD-dependent DNA ligase family. LigA subfamily. Requires Mg(2+) as cofactor. Mn(2+) is required as a cofactor.

It carries out the reaction NAD(+) + (deoxyribonucleotide)n-3'-hydroxyl + 5'-phospho-(deoxyribonucleotide)m = (deoxyribonucleotide)n+m + AMP + beta-nicotinamide D-nucleotide.. In terms of biological role, DNA ligase that catalyzes the formation of phosphodiester linkages between 5'-phosphoryl and 3'-hydroxyl groups in double-stranded DNA using NAD as a coenzyme and as the energy source for the reaction. It is essential for DNA replication and repair of damaged DNA. This chain is DNA ligase, found in Paraburkholderia phytofirmans (strain DSM 17436 / LMG 22146 / PsJN) (Burkholderia phytofirmans).